We begin with the raw amino-acid sequence, 23 residues long: Cysteine-rich venom protein 24 (23 aa).

Positions 1 to 23 are disordered; that stretch reads VDFASESXNKRENQQIVDKHNAL. Basic and acidic residues predominate over residues 8 to 23; it reads XNKRENQQIVDKHNAL.

Belongs to the CRISP family. In terms of processing, contains 8 disulfide bonds. As to expression, expressed by the venom gland.

It localises to the secreted. In Naja kaouthia (Monocled cobra), this protein is Cysteine-rich venom protein 24.